The primary structure comprises 138 residues: ATP synthase epsilon chain (138 aa).

Belongs to the ATPase epsilon chain family. F-type ATPases have 2 components, CF(1) - the catalytic core - and CF(0) - the membrane proton channel. CF(1) has five subunits: alpha(3), beta(3), gamma(1), delta(1), epsilon(1). CF(0) has three main subunits: a, b and c.

The protein localises to the cell inner membrane. Functionally, produces ATP from ADP in the presence of a proton gradient across the membrane. This chain is ATP synthase epsilon chain, found in Polaromonas sp. (strain JS666 / ATCC BAA-500).